Reading from the N-terminus, the 111-residue chain is Putative single-stranded DNA-binding protein ycf41 (111 aa).

An SSB domain is found at methionine 1–lysine 98.

Its subcellular location is the plastid. The protein resides in the chloroplast. The protein is Putative single-stranded DNA-binding protein ycf41 (ycf41) of Porphyra purpurea (Red seaweed).